The following is a 360-amino-acid chain: F-box protein SKP2B (360 aa).

The region spanning 25–76 (ISEWKDIPVELLMKILNLVDDRTVIIASCICSGWRDAVSLGLTRLSLSWCKK) is the F-box domain. LRR repeat units follow at residues 77 to 99 (NMNSLVLSLAPKFVKLQTLVLRQ), 101 to 126 (KPQLEDNAVEAIANHCHELQDLDLSK), 127 to 152 (SSKITDHSLYSLARGCTNLTKLNLSG), 153 to 178 (CTSFSDTALAHLTRFCRKLKILNLCG), 180 to 205 (VEAVSDNTLQAIGENCNQLQSLNLGW), 206 to 231 (CENISDDGVMSLAYGCPDLRTLDLCS), 232 to 257 (CVLITDESVVALANRCIHLRSLGLYY), 258 to 301 (CRNI…NISQ), and 302 to 333 (CTYLTPSAVQAVCDTFPALHTCSGRHSLVMSG).

Functionally, component of SCF(SKP2B) E3 ubiquitin ligase complexes, which mediate the ubiquitination and subsequent proteasomal degradation of the cyclin-dependent kinase inhibitor KRP1. Does not interact with auxin. This is F-box protein SKP2B (SKP2B) from Arabidopsis thaliana (Mouse-ear cress).